The primary structure comprises 1534 residues: Ribosome-binding protein 1 (1534 aa).

Over 1 to 7 (MDIYDTQ) the chain is Lumenal. A helical membrane pass occupies residues 8-28 (TLGVMVFGGFMVVSAIGIFLV). Residues 29–1534 (STFSMKETSY…DSSSKEGTSV (1506 aa)) are Cytoplasmic-facing. 2 disordered regions span residues 45–91 (QRKE…PAPN) and 125–152 (PAMP…VEPA). Over residues 52-63 (THHQKVEKKKKE) the composition is skewed to basic residues. The segment covering 64–88 (KTVEKKGKTKKKEEKPNGKIPDHEP) has biased composition (basic and acidic residues). A compositionally biased stretch (low complexity) spans 125 to 135 (PAMPQEKLAPS). Residue K148 forms a Glycyl lysine isopeptide (Lys-Gly) (interchain with G-Cter in SUMO2) linkage. 2 positions are modified to phosphoserine: S159 and S165. 3 disordered regions span residues 173 to 780 (APKE…PLYL), 968 to 987 (KELV…RKAL), and 1021 to 1082 (RELC…RAEN). The span at 175-194 (KEVPMVVVPPVGAKAGTPAT) shows a compositional bias: low complexity. 54 consecutive repeat copies span residues 197 to 206 (AQGKKAEGAQ), 207 to 216 (NQSRKAEGAP), 217 to 226 (NQGKKAEGAL), 227 to 236 (NQGKKAEGAQ), 237 to 246 (NQGKKVEVAP), 247 to 256 (NQGKKAEGGQ), 257 to 266 (NQGKKVEGAQ), 267 to 276 (NQGKKAEGTP), 277 to 286 (NQGKKAEGAP), 287 to 296 (NQGKKTDGAP), 297 to 306 (NQGKKSEGAP), 307 to 316 (NQGKKAEGAQ), 317 to 326 (NQGKKVEVAP), 327 to 336 (NQGKKAEGGQ), 337 to 346 (NQGKKVEGAQ), 347 to 356 (NQGKKAEGTP), 357 to 366 (NQGKKAEGAP), 367 to 376 (NQGKKTDGAP), 377 to 386 (NQGKKSEGAP), 387 to 396 (NQGKKVEGAQ), 397 to 406 (NQGKKVEGVQ), 407 to 416 (NQGKKAEGAQ), 417 to 426 (NQGKKAEGTS), 427 to 436 (SQGRKEEGTP), 437 to 446 (NLGKKAEGSP), 447 to 456 (NQGKKVEVVQ), 457 to 466 (NQSKKVEGAP), 467 to 476 (NQGKKAEGSQ), 477 to 486 (NQGKKTEGAS), 487 to 496 (NQGKKVDGAQ), 497 to 506 (NQGKKAEGAP), 507 to 516 (NQGKKVEGAQ), 517 to 526 (NQGKKAEGTP), 527 to 536 (NQGKKAEGAQ), 537 to 546 (NQGKKAEGAP), 547 to 556 (NQGKKAEGAP), 557 to 566 (NQGKKAEGAP), 567 to 576 (NQGKKAEGAP), 577 to 586 (NQGKKAEAAP), 587 to 596 (NQGKKAEGAP), 597 to 606 (NQGKKAEGAP), 607 to 616 (NQGKKAEAAP), 617 to 626 (NQGKKAEGAP), 627 to 636 (NQGKKAEGAP), 637 to 646 (NQGKKAEGAP), 647 to 656 (NQGKKAEGAQ), 657 to 666 (NQGKKAEGAP), 667 to 676 (NQGKKADLVA), 677 to 686 (NQGTKAEGVA), 687 to 696 (GQGKKAEGAP), 697 to 706 (NQGKKGEGTP), 707 to 716 (NQGKKSEGSP), 717 to 726 (NQGKKVDASA), and 727 to 736 (NQSKRAESAP). A 54 X 10 AA tandem repeats of [NASG]-[QL]-[GS]-[KRT]-[KR]-[AVTSEG]-[ED]-[AGVLS]-[ATGSV]-[PQLSA] region spans residues 197–736 (AQGKKAEGAQ…NQSKRAESAP (540 aa)). A Phosphothreonine modification is found at T275. Residues 395–428 (AQNQGKKVEGVQNQGKKAEGAQNQGKKAEGTSSQ) show a composition bias toward polar residues. Positions 474 to 499 (GSQNQGKKTEGASNQGKKVDGAQNQG) are enriched in polar residues. Positions 705–718 (TPNQGKKSEGSPNQ) are enriched in polar residues. S715 carries the phosphoserine modification. S747 carries the phosphoserine modification. K752 participates in a covalent cross-link: Glycyl lysine isopeptide (Lys-Gly) (interchain with G-Cter in SUMO1). S1032 is subject to Phosphoserine. Positions 1059–1080 (AEVKSKSEELSGLHGQLKEARA) are enriched in basic and acidic residues. An N6-acetyllysine modification is found at K1064. Residues S1091 and S1110 each carry the phosphoserine modification. Disordered stretches follow at residues 1224–1251 (ELLK…ETQN), 1391–1416 (KSHV…VELK), and 1509–1534 (ERDT…GTSV). Residues 1509-1528 (ERDTVKKLQEQLDKTDDSSS) are compositionally biased toward basic and acidic residues.

Its subcellular location is the endoplasmic reticulum membrane. Functionally, acts as a ribosome receptor and mediates interaction between the ribosome and the endoplasmic reticulum membrane. This chain is Ribosome-binding protein 1 (RRBP1), found in Canis lupus familiaris (Dog).